A 305-amino-acid chain; its full sequence is MAILVNKDTKVVVQGITGKEGSFHAKQCKEYGTQVVAGVTPGKGGMEVEGIPVFNTVKEAVKETGANCSLIFVPAPFAADAIVEALDAGIELVVCITEGIPVKDMMMVKDYMLKNYPNAKLVGPNCPGVITPGEAKVGIMPGHIFKRGKIGIVSRSGTLTYEAAYQLTKYGLGQSTAVGIGGDPVHGLTHRDVIEMFNKDPETEAILMIGEIGGTEEEEAAEYIEKEVDKPVFAYIAGITAPPGKRMGHAGAIIMGGKGTAKAKMEALEKAGAYVIENPAKIGETVAKILKVIELEEEERTSDAE.

CoA-binding positions include 17-20 (TGKE), Lys43, and 96-98 (ITE). Tyr161 provides a ligand contact to substrate. His249 serves as the catalytic Tele-phosphohistidine intermediate.

It belongs to the succinate/malate CoA ligase alpha subunit family. As to quaternary structure, heterotetramer of two alpha and two beta subunits.

It catalyses the reaction succinate + ATP + CoA = succinyl-CoA + ADP + phosphate. The enzyme catalyses GTP + succinate + CoA = succinyl-CoA + GDP + phosphate. It functions in the pathway carbohydrate metabolism; tricarboxylic acid cycle; succinate from succinyl-CoA (ligase route): step 1/1. In terms of biological role, succinyl-CoA synthetase functions in the citric acid cycle (TCA), coupling the hydrolysis of succinyl-CoA to the synthesis of either ATP or GTP and thus represents the only step of substrate-level phosphorylation in the TCA. The alpha subunit of the enzyme binds the substrates coenzyme A and phosphate, while succinate binding and nucleotide specificity is provided by the beta subunit. This Aquifex aeolicus (strain VF5) protein is Succinate--CoA ligase [ADP-forming] subunit alpha.